The following is a 579-amino-acid chain: Putative diflavin flavoprotein A 2 (579 aa).

The interval 50 to 243 (QNGTTYNSYL…GKIKIIANGH (194 aa)) is zinc metallo-hydrolase. Fe cation-binding residues include histidine 99, glutamate 101, aspartate 103, histidine 166, aspartate 185, and histidine 243. Residues 272-460 (VGLFYVADYG…MLASWVSQAS (189 aa)) form the Flavodoxin-like domain. A flavodoxin-reductase-like region spans residues 461 to 579 (LQPLGFTIAV…VRHRKVGNYY (119 aa)).

In the N-terminal section; belongs to the zinc metallo-hydrolase group 3 family. It in the C-terminal section; belongs to the flavodoxin reductase family. It depends on Fe cation as a cofactor.

In terms of biological role, mediates electron transfer from NADH to oxygen, reducing it to water. This modular protein has 3 redox cofactors, in other organisms the same activity requires 2 or 3 proteins. This is Putative diflavin flavoprotein A 2 (dfa2) from Nostoc sp. (strain PCC 7120 / SAG 25.82 / UTEX 2576).